A 152-amino-acid chain; its full sequence is Endoribonuclease YbeY (152 aa).

Residues H117, H121, and H127 each contribute to the Zn(2+) site.

This sequence belongs to the endoribonuclease YbeY family. Requires Zn(2+) as cofactor.

It is found in the cytoplasm. Its function is as follows. Single strand-specific metallo-endoribonuclease involved in late-stage 70S ribosome quality control and in maturation of the 3' terminus of the 16S rRNA. The polypeptide is Endoribonuclease YbeY (Borreliella afzelii (strain PKo) (Borrelia afzelii)).